Consider the following 104-residue polypeptide: Transcription elongation factor A protein-like 9 (104 aa).

Residues 1–48 (MKPCQKMEGNLEKEDEPKPEEEPKPEEKPEEGQEPEEEEKSEETFRER) form a disordered region. The segment covering 9–31 (GNLEKEDEPKPEEEPKPEEKPEE) has biased composition (basic and acidic residues). Residues 32–41 (GQEPEEEEKS) are compositionally biased toward acidic residues.

Belongs to the TFS-II family. TFA subfamily.

The protein localises to the nucleus. May be involved in transcriptional regulation. The protein is Transcription elongation factor A protein-like 9 (Tceal9) of Mus musculus (Mouse).